Consider the following 1845-residue polypeptide: Proteasome adapter and scaffold protein ECM29 (1845 aa).

At Ala2 the chain carries N-acetylalanine. HEAT repeat units lie at residues 28 to 65, 107 to 144, 162 to 205, 326 to 362, 387 to 426, 429 to 466, 469 to 507, 683 to 720, 721 to 759, 783 to 820, 829 to 868, 870 to 907, 931 to 969, 975 to 1012, 1013 to 1050, 1112 to 1149, 1152 to 1189, 1194 to 1231, 1243 to 1281, 1285 to 1323, 1348 to 1386, 1390 to 1427, 1517 to 1554, 1558 to 1595, 1605 to 1642, 1646 to 1683, and 1779 to 1822; these read TDEQLQNIISKFLPPVLLKLSSTQEGVRKKVMELLVHL, YPRLPVEKQCELAPTLLTAMEGKPQPQQDSLMHLLIPT, NLAE…QGSS, RDPVSTRVKLKIVPHLLRSRQAAETFPANIQVVYDGL, PEIKIKPLGPMLLNGLTKLINEYKEDPKLLSMAYSAVGKL, RMPHLFTKDIALVQQLFEALCKEEPETRLAIQEALSMM, AYSTLEGAQRTLMEALVASYLIKPEVQVRQVAVKFASTV, YPEKLATKFVDKTEWIKSLMNNSKEEMRELAALFYSVV, VSTVSGNELKSMIEQLIKTTKDNHSPEIQHGSLLALGFT, TLPDQEELIQSATETIGSFLDSTSPLLAIAACTALGEI, PSEGSGFTKLHLVESLLSRIPSSKETNKMKERAIQTLGYF, VGDGDFPHQKLLLQGLMDSVEAKQIELQFTIGEAITSA, AGAKVNDVVPWVLDVILNKHIISPNPHVRQAACIWLLSL, THKEVKSHLKEIQSAFVSVLSENDELSQDVASKGLGLV, YELGNEQDQQELVSTLVETLMTGKRVKHEVSGETVVFQ, AGEQLAPFLPQLVPRLYRYQFDPNLGIRQAMTSIWNAL, DKSMVDKYLKEILQDLVKNLTSNMWRVRESSCLALNDL, PLDDIIDKLPEIWETLFRVQDDIKESVRKAAELALKTL, KGAAGQRTIAALLPCLLDKGMMSTVTEVRALSINTLVKI, AGAMLKPHAPKLIPALLESLSVLEPQVLNYLSLRATEQE, LQYLDVSVLGELVPRLCELIRSGVGLGTKGGCASVIVSL, CPQDLTPYSGKLMSALLSGLTDRNSVIQKSCAFAMGHL, SFGGIRLYLQELITITQKALQSQSWKMKAQGAIAMASI, TSSLVPPYLGMILTALLQGLAGRTWAGKEELLKAIACV, KSVPNQPSTNEILQAVLKECSKENVKYKIVAISCAADI, TKEDRFQEFSNIVIPLIKKNSLESSGVRTTKNEEENEK, and TYSS…LATM. The segment covering 193–207 has biased composition (low complexity); the sequence is QSRQNSSSAQGSSSN. A disordered region spans residues 193–217; that stretch reads QSRQNSSSAQGSSSNSGGGSGIPQP. Phosphoserine is present on Ser830. Thr836 carries the phosphothreonine modification. A Glycyl lysine isopeptide (Lys-Gly) (interchain with G-Cter in SUMO1) cross-link involves residue Lys1039.

Belongs to the ECM29 family. In terms of assembly, non-stoichiometric component of the proteasome; associates with the 26S proteasome. Interacts (via N-terminus) with VPS11, VPS26A, VPS36, RAB11FIP4 and RABEP1. Interacts (via C-terminus) with DCTN1, DCTN2, KIF5B, MYH7, MYH10, MYO10 and ARF6.

The protein localises to the endoplasmic reticulum. The protein resides in the endoplasmic reticulum-Golgi intermediate compartment. It is found in the endosome. Its subcellular location is the cytoplasm. It localises to the cytoskeleton. The protein localises to the microtubule organizing center. The protein resides in the centrosome. It is found in the nucleus. Its subcellular location is the multivesicular body. It localises to the cytoplasmic vesicle. Adapter/scaffolding protein that binds to the 26S proteasome, motor proteins and other compartment specific proteins. May couple the proteasome to different compartments including endosome, endoplasmic reticulum and centrosome. May play a role in ERAD and other enhanced proteolysis. Promotes proteasome dissociation under oxidative stress. The protein is Proteasome adapter and scaffold protein ECM29 of Homo sapiens (Human).